A 424-amino-acid chain; its full sequence is Serine--tRNA ligase (424 aa).

231 to 233 (TAE) contacts L-serine. An ATP-binding site is contributed by 262–264 (RAE). Glutamate 285 contacts L-serine. 349–352 (EISS) contributes to the ATP binding site. Serine 385 lines the L-serine pocket.

Belongs to the class-II aminoacyl-tRNA synthetase family. Type-1 seryl-tRNA synthetase subfamily. Homodimer. The tRNA molecule binds across the dimer.

The protein resides in the cytoplasm. The catalysed reaction is tRNA(Ser) + L-serine + ATP = L-seryl-tRNA(Ser) + AMP + diphosphate + H(+). It carries out the reaction tRNA(Sec) + L-serine + ATP = L-seryl-tRNA(Sec) + AMP + diphosphate + H(+). Its pathway is aminoacyl-tRNA biosynthesis; selenocysteinyl-tRNA(Sec) biosynthesis; L-seryl-tRNA(Sec) from L-serine and tRNA(Sec): step 1/1. Functionally, catalyzes the attachment of serine to tRNA(Ser). Is also able to aminoacylate tRNA(Sec) with serine, to form the misacylated tRNA L-seryl-tRNA(Sec), which will be further converted into selenocysteinyl-tRNA(Sec). The protein is Serine--tRNA ligase of Geobacillus kaustophilus (strain HTA426).